Reading from the N-terminus, the 337-residue chain is tRNA N6-adenosine threonylcarbamoyltransferase (337 aa).

Residues histidine 111 and histidine 115 each coordinate Fe cation. Substrate-binding positions include 134-138 (LVSGG), aspartate 167, glycine 180, and asparagine 272. Aspartate 300 contributes to the Fe cation binding site.

Belongs to the KAE1 / TsaD family. Fe(2+) serves as cofactor.

The protein resides in the cytoplasm. The catalysed reaction is L-threonylcarbamoyladenylate + adenosine(37) in tRNA = N(6)-L-threonylcarbamoyladenosine(37) in tRNA + AMP + H(+). In terms of biological role, required for the formation of a threonylcarbamoyl group on adenosine at position 37 (t(6)A37) in tRNAs that read codons beginning with adenine. Is involved in the transfer of the threonylcarbamoyl moiety of threonylcarbamoyl-AMP (TC-AMP) to the N6 group of A37, together with TsaE and TsaB. TsaD likely plays a direct catalytic role in this reaction. This is tRNA N6-adenosine threonylcarbamoyltransferase from Escherichia coli O45:K1 (strain S88 / ExPEC).